We begin with the raw amino-acid sequence, 197 residues long: SIGLEC family-like protein 1 (197 aa).

A helical transmembrane segment spans residues 118–138 (GAIYAGIVIALLFLCLLPLIV). Positions 160–179 (VRASQELEMSLKPEEPGKPV) are disordered. A compositionally biased stretch (basic and acidic residues) spans 162 to 176 (ASQELEMSLKPEEPG).

It is found in the membrane. The sequence is that of SIGLEC family-like protein 1 (SIGLECL1) from Homo sapiens (Human).